A 362-amino-acid polypeptide reads, in one-letter code: Alternative oxidase, mitochondrial (362 aa).

Residues 1-64 constitute a mitochondrion transit peptide; that stretch reads MNTPKVNILY…RGFTTTSVVR (64 aa). A helical membrane pass occupies residues 156–176; sequence LVRFIFLESIAGVPGMVAGML. Positions 163, 202, and 205 each coordinate Fe cation. The chain crosses the membrane as a helical span at residues 222–242; it reads LILGAQGVFFNAMFLSYLVSP. Residues Glu-253, Glu-310, and His-313 each coordinate Fe cation.

The protein belongs to the alternative oxidase family. It depends on Fe cation as a cofactor.

The protein localises to the mitochondrion inner membrane. Its function is as follows. Catalyzes cyanide-resistant oxygen consumption. May increase respiration when the cytochrome respiratory pathway is restricted, or in response to low temperatures. The polypeptide is Alternative oxidase, mitochondrial (aod-1) (Gelasinospora sp. (strain S23)).